We begin with the raw amino-acid sequence, 1378 residues long: High molecular weight rhoptry protein 2 (1378 aa).

The signal sequence occupies residues methionine 1–glycine 19. 2 disulfides stabilise this stretch: cysteine 46/cysteine 71 and cysteine 233/cysteine 240. The chain crosses the membrane as a helical span at residues phenylalanine 739–alanine 759. Cystine bridges form between cysteine 791–cysteine 851, cysteine 871–cysteine 912, and cysteine 947–cysteine 1034.

In terms of assembly, component of the RhopH complex. RhopH complex is composed of CLAG3.1/CLAG3.2, RhopH2 and RhopH3 with a 1:1:1 subunit stoichiometry. Interacts with CLAG3.1/CLAG3.2.

It localises to the host cell membrane. Its subcellular location is the parasitophorous vacuole membrane. It is found in the host cytoplasm. The protein localises to the cytoplasm. The protein resides in the cytoplasmic vesicle. It localises to the secretory vesicle. Its subcellular location is the rhoptry. Functionally, participates in the formation of new permeability pathways in Plasmodium-infected erythrocytes enabling the uptake of nutrients from the blood plasma. Required for maintaining invasion capacity of merozoites. Required for parasite growth and proliferation. The sequence is that of High molecular weight rhoptry protein 2 from Plasmodium falciparum (isolate 3D7).